We begin with the raw amino-acid sequence, 154 residues long: 2S sulfur-rich seed storage protein 2 (154 aa).

The first 22 residues, 1 to 22 (MAKMSVVAAALLALLVLGQATA), serve as a signal peptide directing secretion. Positions 29 to 52 (TTLEEEQEENPRGRSEQQCREQME) are disordered. Residues 37 to 52 (ENPRGRSEQQCREQME) are compositionally biased toward basic and acidic residues. 4 cysteine pairs are disulfide-bonded: Cys47/Cys101, Cys60/Cys90, Cys91/Cys138, and Cys103/Cys145. The propeptide occupies 72 to 76 (PYQNP). Residues 151 to 154 (TAWL) constitute a propeptide that is removed on maturation.

It belongs to the 2S seed storage albumins family. The mature protein consists of a small and a large chain linked by disulfide bonds.

In terms of biological role, this is a 2S seed storage protein. This chain is 2S sulfur-rich seed storage protein 2 (BE2S2), found in Bertholletia excelsa (Brazil nut).